The sequence spans 503 residues: LEM domain-containing protein 2 (503 aa).

Ala-2 carries the post-translational modification N-acetylalanine. One can recognise an LEM domain in the interval 2 to 42 (AGLSDLELRRELQALGFQPGPITDTTRDVYRNKLRRLRGEA). A compositionally biased stretch (basic and acidic residues) spans 42 to 74 (ARLRDEERLREEARPRGEERLREEARLREDAPL). 2 disordered regions span residues 42 to 97 (ARLR…SGSA) and 127 to 157 (AQLRRRASVRGSSEEDEDARTPDRATQGPGL). The segment at 74 to 130 (LRARPAAASPRAEPWLSQPASGSAYATPGAYGDIRPSAASWVGSRGLAYPARPAQLR) is required for nuclear retention and interaction with LMNA isoform C. The span at 75–87 (RARPAAASPRAEP) shows a compositional bias: low complexity. Ser-166 and Ser-175 each carry phosphoserine. Residues 172–198 (LPSSLLGPDPRPGLRATRAGPAGAARA) form a disordered region. Low complexity predominate over residues 184-197 (GLRATRAGPAGAAR). 2 helical membrane-spanning segments follow: residues 213-233 (LLLWASLGLLLVFLGILWVKM) and 377-397 (VTNVLIFFWCLAFLWGLLILL). The interval 395–503 (ILLKYRWRKL…KPSSFSDSER (109 aa)) is winged-Helix (WH). A phosphoserine mark is found at Ser-497, Ser-499, and Ser-501.

Interacts (via N-terminus) with LMNA isoform C (via C-terminus) (in vitro). Interacts (via LEM domain) with BANF1. Interacts (via C-terminus) with CHMP7. Interacts (via N-terminus) with tubulin; the interaction causes microtubule bundling and stabilization (in vitro). In terms of processing, phosphorylated; strongly phosphorylated in mitosis compared to G1/S. As to expression, ubiquitously expressed, including bone marrow, brain, kidney, colon, skeletal muscle, thymus, testis and uterus.

It localises to the nucleus inner membrane. The protein resides in the nucleus envelope. It is found in the cytoplasm. Its subcellular location is the cytoskeleton. The protein localises to the spindle. Functionally, nuclear lamina-associated inner nuclear membrane protein that is involved in nuclear structure organization, maintenance of nuclear envelope (NE) integrity and NE reformation after mitosis. Plays a role as transmembrane adapter for the endosomal sorting complexes required for transport (ESCRT), and is thereby involved in ESCRT-mediated NE reformation. Promotes ESCRT-mediated NE closure by recruiting CHMP7 and downstream ESCRT-III proteins IST1/CHMP8 and CHMP2A to the reforming NE during anaphase. During nuclear reassembly, condenses into a liquid-like coating around microtubule spindles and coassembles with CHMP7 to form a macromolecular O-ring seal at the confluence between membranes, chromatin, and the spindle to facilitate early nuclear sealing. Plays a role in the organization of heterochromatin associated with the NE and in the maintenance of NE organization under mechanical stress. Required for embryonic development and involved in regulation of several signaling pathways such as MAPK and AKT. Required for myoblast differentiation involving regulation of ERK signaling. Essential for cardiac homeostasis and proper heart function. The chain is LEM domain-containing protein 2 (LEMD2) from Homo sapiens (Human).